A 715-amino-acid chain; its full sequence is ATP-dependent DNA helicase Hel308 (715 aa).

The Q motif motif lies at 1 to 29 (MKVEELRIDERIKEVLKKRGISELYPPQA). Residues Gln-28 and 46-53 (IPTASGKT) each bind ATP. Positions 33-197 (TSGILKGENA…WLNAKLIKSD (165 aa)) constitute a Helicase ATP-binding domain. The short motif at 145–148 (DEIH) is the DEAH box element. The 194-residue stretch at 229 to 422 (LVYDAIKRSK…ILRGQILALI (194 aa)) folds into the Helicase C-terminal domain.

The protein belongs to the helicase family. Hel308 subfamily. In terms of assembly, monomer.

The catalysed reaction is Couples ATP hydrolysis with the unwinding of duplex DNA by translocating in the 3'-5' direction.. It carries out the reaction ATP + H2O = ADP + phosphate + H(+). In terms of biological role, DNA-dependent ATPase and 3'-5' DNA helicase that may be involved in repair of stalled replication forks. The chain is ATP-dependent DNA helicase Hel308 from Pyrococcus horikoshii (strain ATCC 700860 / DSM 12428 / JCM 9974 / NBRC 100139 / OT-3).